A 619-amino-acid chain; its full sequence is DBH-like monooxygenase protein 2 (619 aa).

A signal peptide spans 1 to 21; sequence MACVLLFRLFLLLVLAAFSQG. Topologically, residues 22 to 594 are extracellular; it reads KRLGPTSPLR…LSGSNTATLR (573 aa). The DOMON domain maps to 40–156; it reads RAVFLRWDFD…DTMRVLAAYG (117 aa). The active site involves Tyr-209. 2 disulfide bridges follow: Cys-211/Cys-261 and Cys-248/Cys-271. The Cu cation site is built by His-241 and His-242. N-linked (GlcNAc...) asparagine glycosylation occurs at Asn-250. Residues His-309, His-390, and His-392 each coordinate Cu cation. 2 disulfides stabilise this stretch: Cys-366-Cys-481 and Cys-444-Cys-466. The active site involves His-390. N-linked (GlcNAc...) asparagine glycosylation occurs at Asn-405. Met-465 is a Cu cation binding site. Residue Asn-477 is glycosylated (N-linked (GlcNAc...) asparagine). The chain crosses the membrane as a helical span at residues 595–615; sequence PLPMIAVLFLQGSLSCLLAML. The Cytoplasmic segment spans residues 616–619; it reads QTGV.

Belongs to the copper type II ascorbate-dependent monooxygenase family. Cu(2+) serves as cofactor. As to expression, expressed at low levels in thymus and testis.

The protein resides in the membrane. The polypeptide is DBH-like monooxygenase protein 2 (Moxd2) (Mus musculus (Mouse)).